The primary structure comprises 481 residues: UDP-glycosyltransferase 85C2 (481 aa).

The Proton acceptor role is filled by His23. Residue His23 participates in an anthocyanidin binding. Residue Asp120 is the Charge relay of the active site. Positions 143, 362, 377, 380, 382, 385, 401, and 402 each coordinate UDP-alpha-D-glucose.

It belongs to the UDP-glycosyltransferase family.

It carries out the reaction steviol + UDP-alpha-D-glucose = steviolmonoside + UDP + H(+). The enzyme catalyses steviolmonoside + UDP-alpha-D-glucose = rubusoside + UDP. Its function is as follows. Involved in the biosynthesis of steviol glycosides in leaves. Converts steviol to the mono-glycoside steviolmonoside. Converts the mono-glycoside steviolmonoside to the bi-glycoside rubusoside. This Stevia rebaudiana (Stevia) protein is UDP-glycosyltransferase 85C2.